We begin with the raw amino-acid sequence, 292 residues long: Ribosomal RNA small subunit methyltransferase A (292 aa).

6 residues coordinate S-adenosyl-L-methionine: Asn28, Leu30, Gly55, Glu76, Asp101, and Asn126.

It belongs to the class I-like SAM-binding methyltransferase superfamily. rRNA adenine N(6)-methyltransferase family. RsmA subfamily.

The protein localises to the cytoplasm. The catalysed reaction is adenosine(1518)/adenosine(1519) in 16S rRNA + 4 S-adenosyl-L-methionine = N(6)-dimethyladenosine(1518)/N(6)-dimethyladenosine(1519) in 16S rRNA + 4 S-adenosyl-L-homocysteine + 4 H(+). In terms of biological role, specifically dimethylates two adjacent adenosines (A1518 and A1519) in the loop of a conserved hairpin near the 3'-end of 16S rRNA in the 30S particle. May play a critical role in biogenesis of 30S subunits. The sequence is that of Ribosomal RNA small subunit methyltransferase A from Bacillus cereus (strain G9842).